We begin with the raw amino-acid sequence, 102 residues long: Anti-lipopolysaccharide factor (102 aa).

Cys32 and Cys53 are disulfide-bonded.

Its function is as follows. Binds tightly to LPS and thus specifically inhibits the LPS-mediated activation of the hemolymph coagulation. It has a strong antibacterial effect especially on the growth of Gram-negative bacteria. This is Anti-lipopolysaccharide factor from Tachypleus tridentatus (Japanese horseshoe crab).